Reading from the N-terminus, the 175-residue chain is NADH-quinone oxidoreductase subunit I 1 (175 aa).

2 4Fe-4S ferredoxin-type domains span residues Leu-44–Ala-74 and Arg-90–Asp-119. Cys-54, Cys-57, Cys-60, Cys-64, Cys-99, Cys-102, Cys-105, and Cys-109 together coordinate [4Fe-4S] cluster.

This sequence belongs to the complex I 23 kDa subunit family. NDH-1 is composed of 14 different subunits. Subunits NuoA, H, J, K, L, M, N constitute the membrane sector of the complex. [4Fe-4S] cluster is required as a cofactor.

The protein localises to the cell membrane. The enzyme catalyses a quinone + NADH + 5 H(+)(in) = a quinol + NAD(+) + 4 H(+)(out). NDH-1 shuttles electrons from NADH, via FMN and iron-sulfur (Fe-S) centers, to quinones in the respiratory chain. The immediate electron acceptor for the enzyme in this species is believed to be menaquinone. Couples the redox reaction to proton translocation (for every two electrons transferred, four hydrogen ions are translocated across the cytoplasmic membrane), and thus conserves the redox energy in a proton gradient. The sequence is that of NADH-quinone oxidoreductase subunit I 1 from Mycolicibacterium paratuberculosis (strain ATCC BAA-968 / K-10) (Mycobacterium paratuberculosis).